The chain runs to 285 residues: Energy-coupling factor transporter ATP-binding protein EcfA3 (285 aa).

The region spanning 6–242 is the ABC transporter domain; sequence LKVEELNYNY…KEVIRKVNLR (237 aa). Residue 39 to 46 participates in ATP binding; the sequence is GGNGVGKS.

This sequence belongs to the ABC transporter superfamily. Energy-coupling factor EcfA family. In terms of assembly, forms a stable energy-coupling factor (ECF) transporter complex composed of 2 membrane-embedded substrate-binding proteins (S component), 2 ATP-binding proteins (A component) and 2 transmembrane proteins (T component).

Its subcellular location is the cell membrane. Functionally, ATP-binding (A) component of a common energy-coupling factor (ECF) ABC-transporter complex. Unlike classic ABC transporters this ECF transporter provides the energy necessary to transport a number of different substrates. This is Energy-coupling factor transporter ATP-binding protein EcfA3 from Clostridium perfringens (strain ATCC 13124 / DSM 756 / JCM 1290 / NCIMB 6125 / NCTC 8237 / Type A).